A 321-amino-acid polypeptide reads, in one-letter code: MKTTFLDFEQPIAELEEKIEQLRFVQDDSAVDISEEIARLEVKSQALTKDLYAKLTPWQIAQVARHPQRPYTLDYVQHIFTDFEELHGDRAYADDKAIVGGLARFNGQSCVIIGHQKGRDTKEKIARNFGMPRPEGYRKAMRLMKLAEKFGLPVFTFVDTPGAYPGIGAEERGQSEAIGHNLYVMAELKVPLICTVIGEGGSGGALAIAVGDQVMMMQYSTYSVISPEGCASILWKSAEKASEAAETMGITAARLKSLGLVDKVVNEPVGGAHRDHRAAAQSLKRALAEALRQVDTLSPSELVEQRMEKLMGYGRFKEIAA.

The region spanning 39 to 293 is the CoA carboxyltransferase C-terminal domain; that stretch reads RLEVKSQALT…KRALAEALRQ (255 aa).

It belongs to the AccA family. Acetyl-CoA carboxylase is a heterohexamer composed of biotin carboxyl carrier protein (AccB), biotin carboxylase (AccC) and two subunits each of ACCase subunit alpha (AccA) and ACCase subunit beta (AccD).

It is found in the cytoplasm. The enzyme catalyses N(6)-carboxybiotinyl-L-lysyl-[protein] + acetyl-CoA = N(6)-biotinyl-L-lysyl-[protein] + malonyl-CoA. It participates in lipid metabolism; malonyl-CoA biosynthesis; malonyl-CoA from acetyl-CoA: step 1/1. In terms of biological role, component of the acetyl coenzyme A carboxylase (ACC) complex. First, biotin carboxylase catalyzes the carboxylation of biotin on its carrier protein (BCCP) and then the CO(2) group is transferred by the carboxyltransferase to acetyl-CoA to form malonyl-CoA. This Azoarcus sp. (strain BH72) protein is Acetyl-coenzyme A carboxylase carboxyl transferase subunit alpha.